Here is a 202-residue protein sequence, read N- to C-terminus: Adapter protein MecA 2 (202 aa).

Belongs to the MecA family. As to quaternary structure, homodimer.

In terms of biological role, enables the recognition and targeting of unfolded and aggregated proteins to the ClpC protease or to other proteins involved in proteolysis. Acts negatively in the development of competence by binding ComK and recruiting it to the ClpCP protease. When overexpressed, inhibits sporulation. Also involved in Spx degradation by ClpC. This Bacillus anthracis protein is Adapter protein MecA 2 (mecA2).